Here is a 199-residue protein sequence, read N- to C-terminus: Recombination protein RecR (199 aa).

Residues 57–72 (CSICFNLTDTDPCAIC) form a C4-type zinc finger. A Toprim domain is found at 80-175 (RLLMVVEEAK…KVTRIAHGLP (96 aa)).

This sequence belongs to the RecR family.

Functionally, may play a role in DNA repair. It seems to be involved in an RecBC-independent recombinational process of DNA repair. It may act with RecF and RecO. The polypeptide is Recombination protein RecR (Carboxydothermus hydrogenoformans (strain ATCC BAA-161 / DSM 6008 / Z-2901)).